We begin with the raw amino-acid sequence, 700 residues long: Protein kinase C, eye isozyme (700 aa).

2 Phorbol-ester/DAG-type zinc fingers span residues 71 to 121 (GHRF…VFKC) and 136 to 186 (KHGW…PPMC). Residues 189-310 (DISEVRGKLL…LQKEPVDGWY (122 aa)) enclose the C2 domain. Ca(2+)-binding residues include D222, D228, D281, D283, S286, and D289. In terms of domain architecture, Protein kinase spans 371 to 629 (FNFVKVIGKG…RQEITTHPFF (259 aa)). Residues 377 to 385 (IGKGSFGKV) and K400 each bind ATP. Catalysis depends on D495, which acts as the Proton acceptor. The AGC-kinase C-terminal domain maps to 630 to 700 (RNVDWDKAEA…FMNPEFITII (71 aa)).

This sequence belongs to the protein kinase superfamily. AGC Ser/Thr protein kinase family. PKC subfamily. Ca(2+) is required as a cofactor. As to expression, exclusively expressed in photoreceptor cells.

The catalysed reaction is L-seryl-[protein] + ATP = O-phospho-L-seryl-[protein] + ADP + H(+). It carries out the reaction L-threonyl-[protein] + ATP = O-phospho-L-threonyl-[protein] + ADP + H(+). This is a calcium-activated, phospholipid-dependent, serine- and threonine-specific enzyme. This isozyme is a negative regulator of the visual transduction cascade and has been shown to be required for photoreceptor cell inactivation and light adaptation. Negative regulation is dependent on interaction with scaffolding protein inaD. Acts in a hh-signaling pathway which regulates the Duox-dependent gut immune response to bacterial uracil; required for the activation of Cad99C and consequently Cad99C-dependent endosome formation, which is essential for the Duox-dependent production of reactive oxygen species (ROS) in response to intestinal bacterial infection. In Drosophila melanogaster (Fruit fly), this protein is Protein kinase C, eye isozyme (inaC).